The primary structure comprises 355 residues: Ornithine transcarbamylase, mitochondrial (355 aa).

A mitochondrion-targeting transit peptide spans 1-35 (MLFINLRTLLNNAALRNGHNFVVRNFRCGQPVQDK). Position 71 is an N6-acetyllysine; alternate (lysine 71). Position 71 is an N6-succinyllysine; alternate (lysine 71). Lysine 81 carries the post-translational modification N6-succinyllysine. The residue at position 89 (lysine 89) is an N6-acetyllysine; alternate. Lysine 89 is modified (N6-succinyllysine; alternate). Carbamoyl phosphate is bound at residue 91-95 (STRTR). Residue serine 134 is modified to Phosphoserine. Arginine 142 contributes to the carbamoyl phosphate binding site. Arginine 142 serves as a coordination point for L-ornithine. Lysine 145 bears the N6-acetyllysine; alternate mark. The residue at position 145 (lysine 145) is an N6-succinyllysine; alternate. Histidine 169 contacts carbamoyl phosphate. An L-ornithine-binding site is contributed by asparagine 200. Lysine 222, lysine 232, and lysine 239 each carry N6-acetyllysine; alternate. N6-succinyllysine; alternate is present on residues lysine 222, lysine 232, and lysine 239. Lysine 244 is modified (N6-acetyllysine). L-ornithine is bound at residue 264–268 (DTWIS). 2 positions are modified to N6-succinyllysine: lysine 275 and lysine 290. At lysine 293 the chain carries N6-acetyllysine; alternate. Lysine 293 carries the N6-succinyllysine; alternate modification. Position 303–306 (303–306 (HCLP)) interacts with L-ornithine. Residue cysteine 304 is part of the active site. Lysine 308 carries the N6-acetyllysine; alternate modification. Lysine 308 is modified (N6-succinyllysine; alternate). Arginine 331 lines the carbamoyl phosphate pocket. Residue arginine 331 participates in L-ornithine binding.

This sequence belongs to the aspartate/ornithine carbamoyltransferase superfamily. OTCase family. In terms of assembly, homotrimer. In terms of processing, acetylation at Lys-89 negatively regulates ornithine carbamoyltransferase activity in response to nutrient signals.

It localises to the mitochondrion matrix. The enzyme catalyses carbamoyl phosphate + L-ornithine = L-citrulline + phosphate + H(+). It participates in nitrogen metabolism; urea cycle; L-citrulline from L-ornithine and carbamoyl phosphate: step 1/1. Its activity is regulated as follows. Negatively regulated by lysine acetylation. In terms of biological role, catalyzes the second step of the urea cycle, the condensation of carbamoyl phosphate with L-ornithine to form L-citrulline. The urea cycle ensures the detoxification of ammonia by converting it to urea for excretion. This Ovis aries (Sheep) protein is Ornithine transcarbamylase, mitochondrial.